The following is a 103-amino-acid chain: Insulin (103 aa).

An N-terminal signal peptide occupies residues 1–20 (IQSLPLLALLALSGPGTSHA). 3 disulfide bridges follow: C27-C89, C39-C102, and C88-C93. The propeptide at 53–80 (DAEHPLVNGPLHGEVGDLPFQQEEFEKV) is c peptide.

It belongs to the insulin family. As to quaternary structure, heterodimer of a B chain and an A chain linked by two disulfide bonds.

Its subcellular location is the secreted. Its function is as follows. Insulin decreases blood glucose concentration. It increases cell permeability to monosaccharides, amino acids and fatty acids. It accelerates glycolysis, the pentose phosphate cycle, and glycogen synthesis in liver. The chain is Insulin (INS) from Selasphorus rufus (Rufous hummingbird).